A 198-amino-acid chain; its full sequence is Peptidyl-tRNA hydrolase (198 aa).

TRNA is bound at residue Tyr15. The active-site Proton acceptor is the His20. TRNA contacts are provided by Phe65, Asn67, and Asn113.

Belongs to the PTH family. As to quaternary structure, monomer.

The protein localises to the cytoplasm. The catalysed reaction is an N-acyl-L-alpha-aminoacyl-tRNA + H2O = an N-acyl-L-amino acid + a tRNA + H(+). Functionally, hydrolyzes ribosome-free peptidyl-tRNAs (with 1 or more amino acids incorporated), which drop off the ribosome during protein synthesis, or as a result of ribosome stalling. In terms of biological role, catalyzes the release of premature peptidyl moieties from peptidyl-tRNA molecules trapped in stalled 50S ribosomal subunits, and thus maintains levels of free tRNAs and 50S ribosomes. This Ehrlichia chaffeensis (strain ATCC CRL-10679 / Arkansas) protein is Peptidyl-tRNA hydrolase.